The following is a 306-amino-acid chain: Homoserine kinase (306 aa).

91-101 (PLARGLGSSAA) is a binding site for ATP.

It belongs to the GHMP kinase family. Homoserine kinase subfamily.

The protein localises to the cytoplasm. The enzyme catalyses L-homoserine + ATP = O-phospho-L-homoserine + ADP + H(+). It participates in amino-acid biosynthesis; L-threonine biosynthesis; L-threonine from L-aspartate: step 4/5. In terms of biological role, catalyzes the ATP-dependent phosphorylation of L-homoserine to L-homoserine phosphate. The polypeptide is Homoserine kinase (Bacillus licheniformis (strain ATCC 14580 / DSM 13 / JCM 2505 / CCUG 7422 / NBRC 12200 / NCIMB 9375 / NCTC 10341 / NRRL NRS-1264 / Gibson 46)).